The sequence spans 462 residues: uncharacterized protein (462 aa).

A divalent metal cation is bound by residues D12, H14, D48, N81, H179, and H202. A coiled-coil region spans residues 258–291 (ESAETKAFLNEKEREAEEKLSDAVAELAQDAEVK).

This sequence belongs to the metallophosphoesterase superfamily. Requires a divalent metal cation as cofactor.

This is an uncharacterized protein from Bacillus subtilis (strain 168).